A 670-amino-acid chain; its full sequence is Solute carrier organic anion transporter family member 1A4 (670 aa).

The Cytoplasmic portion of the chain corresponds to 1–20; it reads MGKSEKEVATHGVRCFSKIK. Residues 21-40 traverse the membrane as a helical segment; it reads AFLLALTCAYVSKSLSGTYM. The Extracellular segment spans residues 41–59; the sequence is NSMLTQIERQFGIPTSVVG. The chain crosses the membrane as a helical span at residues 60–80; the sequence is LINGSFEIGNLLLIIFVSYFG. Topologically, residues 81-86 are cytoplasmic; it reads TKLHRP. Residues 87–111 form a helical membrane-spanning segment; it reads IMIGVGCAVMGLGCFLISIPHFLMG. The Extracellular segment spans residues 112–155; that stretch reads RYEYETTILPTSNLSSNSFVCTENRTQTLKPTQDPTECVKEMKS. N-linked (GlcNAc...) asparagine glycans are attached at residues Asn124 and Asn135. Residues 156–184 form a helical membrane-spanning segment; it reads LMWIYVLVGNIIRGMGETPIMPLGISYIE. Topologically, residues 185-203 are cytoplasmic; that stretch reads DFAKSENSPLYIGILETGM. Residues 204 to 224 traverse the membrane as a helical segment; the sequence is TIGPLIGLLLGSSCANIYVDT. The Extracellular portion of the chain corresponds to 225–242; that stretch reads GSVNTDDLTITPTDTRWV. Residues 243-267 form a helical membrane-spanning segment; the sequence is GAWWIGFLVCAGVNILTSIPFFFFP. Residues 268 to 311 are Cytoplasmic-facing; the sequence is KTLLKEGLQDNGDGTENAKEEKHREKIKEENRGITKDFFLFMKS. The chain crosses the membrane as a helical span at residues 312 to 333; the sequence is LSCNPIYMIFILISVIQVNAFI. Topologically, residues 334–353 are extracellular; it reads NSFTFMPKYLEQQYGKSTAE. A helical membrane pass occupies residues 354–377; that stretch reads IVFLMGLYMLPPICLGYLIGGLIM. The Cytoplasmic segment spans residues 378-381; the sequence is KKFK. Residues 382 to 405 traverse the membrane as a helical segment; the sequence is ITVKKAAYIGFWLSLTEYLLSFVS. At 406-513 the chain is on the extracellular side; sequence YIMTCDNFPV…PECANKLQYF (108 aa). Residues 433 to 488 enclose the Kazal-like domain; the sequence is NNVLADCNTKCSCLTNTWDPVCGDNGLSYMSACLAGCEKSVGTGTNMVFQNCSCIQ. 3 disulfide bridges follow: Cys439–Cys469, Cys445–Cys465, and Cys454–Cys486. 2 N-linked (GlcNAc...) asparagine glycosylation sites follow: Asn483 and Asn492. A helical membrane pass occupies residues 514–536; sequence LIISIIGCFIFSLGAIPGYMVLL. At 537-545 the chain is on the cytoplasmic side; it reads RCMKSEEKS. A helical transmembrane segment spans residues 546 to 571; that stretch reads LGVGLHTFCMRILGGIPAPIYFGALI. The Extracellular segment spans residues 572–605; that stretch reads DRTCLHWGTLKCGEPGACRMYDINSFRRIYLGLP. The chain crosses the membrane as a helical span at residues 606 to 623; sequence AALRGASFLPALFILILM. The Cytoplasmic segment spans residues 624-670; the sequence is RKFQFPGDIDSSDTDPAEMKLTAKESKCTNVHRSPTMQNDGERKTKL. Phosphoserine is present on residues Ser634 and Ser635. A disordered region spans residues 649-670; sequence SKCTNVHRSPTMQNDGERKTKL. Positions 651–662 are enriched in polar residues; the sequence is CTNVHRSPTMQN.

Belongs to the organo anion transporter (TC 2.A.60) family. As to expression, highly expressed in brain and liver. Detected at very low levels in heart and lung.

The protein resides in the cell membrane. It catalyses the reaction estrone 3-sulfate(out) = estrone 3-sulfate(in). It carries out the reaction taurocholate(out) = taurocholate(in). The catalysed reaction is prostaglandin E2(out) = prostaglandin E2(in). The enzyme catalyses L-thyroxine(out) = L-thyroxine(in). In terms of biological role, mediates the Na(+)-independent transport of organic anions such as taurocholate, cholate, 17-beta-glucuronosyl estradiol, prostaglandin E2, estrone 3-sulfate, L-thyroxine (T4), the cardiac glycosides ouabain and digoxin and thyroid hormones. Shows a pH-sensitive substrate specificity which may be ascribed to the protonation state of the binding site and leads to a stimulation of substrate transport in an acidic microenvironment. Hydrogencarbonate/HCO3(-) acts as the probable counteranion that exchanges for organic anions. The chain is Solute carrier organic anion transporter family member 1A4 (Slco1a4) from Mus musculus (Mouse).